An 84-amino-acid polypeptide reads, in one-letter code: Alpha-like toxin BmK M1 (84 aa).

Positions 1–19 (MNYLVMISFALLLMTGVES) are cleaved as a signal peptide. The LCN-type CS-alpha/beta domain occupies 21–83 (RDAYIAKPHN…VPIRVPGKCH (63 aa)). Disulfide bonds link C31/C82, C35/C55, C41/C65, and C45/C67. A propeptide (removed by a carboxypeptidase) is located at residue R84.

The protein belongs to the long (4 C-C) scorpion toxin superfamily. Sodium channel inhibitor family. Alpha subfamily. As to expression, expressed by the venom gland.

It localises to the secreted. In terms of biological role, alpha toxins bind voltage-independently at site-3 of sodium channels (Nav) and inhibit the inactivation of the activated channels thereby blocking neuronal transmission. This toxin is active against both mammals and insects, and is classified as an alpha-like toxin. It is active on Nav1.2/SCN2A (EC(50)=139-252 nM), Nav1.3/SCN3A (EC(50)=565 nM), Nav1.4/SCN4A and Nav1.5/SCN5A (EC(50)=195-500 nM), Nav1.6/SCN8A (EC(50)=214 nM), and drosophila DmNav1 (EC(50)=30 nM). In mNav1.6/SCN8A, the toxin induces a large increase in both transient and persistent currents, which correlates with a prominent reduction in the fast component of inactivating current. In rNav1.2/SCN2A and rNav1.3/SCN3A, toxin-increased currents is much smaller. Moreover, the toxin only accelerates the slow inactivation development and delay recovery of mNav1.6/SCN8A through binding to the channel in the open state. Is 6-fold more toxic than BmK-M2. In vivo, intrahippocampal injection into rat induces epileptiform responses. In addition, intraplantar injection into rat induces spontaneous nociception and hyperalgesia. The sequence is that of Alpha-like toxin BmK M1 from Olivierus martensii (Manchurian scorpion).